The following is a 33-amino-acid chain: Cytochrome b6-f complex subunit 8 (33 aa).

The helical transmembrane segment at 2-22 (LFTLAWASLAAVFSFSIAMVV) threads the bilayer.

It belongs to the PetN family. As to quaternary structure, the 4 large subunits of the cytochrome b6-f complex are cytochrome b6, subunit IV (17 kDa polypeptide, PetD), cytochrome f and the Rieske protein, while the 4 small subunits are PetG, PetL, PetM and PetN. The complex functions as a dimer.

Its subcellular location is the cellular thylakoid membrane. Functionally, component of the cytochrome b6-f complex, which mediates electron transfer between photosystem II (PSII) and photosystem I (PSI), cyclic electron flow around PSI, and state transitions. This chain is Cytochrome b6-f complex subunit 8, found in Synechococcus sp. (strain WH7803).